Reading from the N-terminus, the 443-residue chain is Probable D-serine dehydratase (443 aa).

Lys-116 bears the N6-(pyridoxal phosphate)lysine mark.

This sequence belongs to the serine/threonine dehydratase family. DsdA subfamily. Pyridoxal 5'-phosphate serves as cofactor.

The catalysed reaction is D-serine = pyruvate + NH4(+). The polypeptide is Probable D-serine dehydratase (Bacillus cereus (strain ATCC 14579 / DSM 31 / CCUG 7414 / JCM 2152 / NBRC 15305 / NCIMB 9373 / NCTC 2599 / NRRL B-3711)).